Reading from the N-terminus, the 428-residue chain is Stabilizer of axonemal microtubules 4 (428 aa).

A disordered region spans residues 201-231 (AKEETGFTEESNKNPIVFQPPSQALPGDPVL).

Microtubule inner protein component of sperm flagellar doublet microtubules. Interacts with PPP1CA.

Its subcellular location is the cell projection. It is found in the cilium. It localises to the cytoplasm. The protein localises to the cytoskeleton. The protein resides in the flagellum axoneme. The protein is Stabilizer of axonemal microtubules 4 of Bos taurus (Bovine).